A 324-amino-acid polypeptide reads, in one-letter code: tRNA N6-adenosine threonylcarbamoyltransferase (324 aa).

Residues histidine 107, histidine 111, and tyrosine 127 each contribute to the Fe cation site. Substrate-binding positions include 127–131 (YVSGG), aspartate 159, glycine 172, glutamate 176, and asparagine 257. Residue aspartate 285 coordinates Fe cation.

Belongs to the KAE1 / TsaD family. Monomer. Component of the KEOPS complex that consists of Kae1, Bud32, Cgi121 and Pcc1; the whole complex dimerizes. It depends on Fe(2+) as a cofactor.

It is found in the cytoplasm. The enzyme catalyses L-threonylcarbamoyladenylate + adenosine(37) in tRNA = N(6)-L-threonylcarbamoyladenosine(37) in tRNA + AMP + H(+). In terms of biological role, required for the formation of a threonylcarbamoyl group on adenosine at position 37 (t(6)A37) in tRNAs that read codons beginning with adenine. Is a component of the KEOPS complex that is probably involved in the transfer of the threonylcarbamoyl moiety of threonylcarbamoyl-AMP (TC-AMP) to the N6 group of A37. Kae1 likely plays a direct catalytic role in this reaction, but requires other protein(s) of the complex to fulfill this activity. The sequence is that of tRNA N6-adenosine threonylcarbamoyltransferase from Thermococcus sibiricus (strain DSM 12597 / MM 739).